Reading from the N-terminus, the 212-residue chain is Histone H1.2 (212 aa).

The segment covering 1-17 (MSEAAPAAPAAAPPAEK) has biased composition (low complexity). Residues 1–41 (MSEAAPAAPAAAPPAEKAPAKKKAAKKPAGVRRKASGPPVS) form a disordered region. An N-acetylserine modification is found at serine 2. Serine 2 bears the Phosphoserine mark. Lysine 17 is subject to N6-acetyllysine. The segment covering 20–35 (AKKKAAKKPAGVRRKA) has biased composition (basic residues). 3 positions are modified to N6-(2-hydroxyisobutyryl)lysine: lysine 23, lysine 26, and lysine 27. Position 34 is an N6-(beta-hydroxybutyryl)lysine; alternate (lysine 34). Position 34 is an N6-crotonyllysine; alternate (lysine 34). At lysine 34 the chain carries N6-methyllysine; alternate. The H15 domain maps to 36-109 (SGPPVSELIT…GASGSFKLNK (74 aa)). Lysine 46 carries the post-translational modification N6-(2-hydroxyisobutyryl)lysine. N6-(beta-hydroxybutyryl)lysine; alternate is present on lysine 52. An N6-(2-hydroxyisobutyryl)lysine; alternate modification is found at lysine 52. Position 54 is a citrulline (arginine 54). Lysine 63 carries the N6-(2-hydroxyisobutyryl)lysine modification. Lysine 64 carries the N6-(beta-hydroxybutyryl)lysine; alternate modification. Lysine 64 carries the N6-crotonyllysine; alternate modification. Lysine 64 bears the N6-(2-hydroxyisobutyryl)lysine; alternate mark. An N6-(2-hydroxyisobutyryl)lysine mark is found at lysine 75 and lysine 81. N6-(beta-hydroxybutyryl)lysine; alternate is present on residues lysine 85 and lysine 90. N6-crotonyllysine; alternate occurs at positions 85, 90, and 97. Lysine 85, lysine 90, and lysine 97 each carry N6-(2-hydroxyisobutyryl)lysine; alternate. Lysine 97 carries the N6-succinyllysine; alternate modification. The tract at residues 98 to 212 (GTGASGSFKL…KAKKVAAKKK (115 aa)) is disordered. Position 104 is a phosphoserine; by PKC (serine 104). N6-(beta-hydroxybutyryl)lysine is present on lysine 106. An N6-(2-hydroxyisobutyryl)lysine mark is found at lysine 110, lysine 117, lysine 121, lysine 129, and lysine 136. Low complexity predominate over residues 121 to 148 (KKAGAAKAKKPAGAAKKPKKATGAATPK). A Phosphothreonine modification is found at threonine 146. At lysine 148 the chain carries N6-(2-hydroxyisobutyryl)lysine. Residues 149-160 (KAAKKTPKKAKK) show a composition bias toward basic residues. N6-crotonyllysine; alternate occurs at positions 159 and 168. 2 positions are modified to N6-(2-hydroxyisobutyryl)lysine; alternate: lysine 159 and lysine 168. Over residues 169–212 (KVAKSPKKAKVTKPKKVKSASKAVKPKAAKPKVAKAKKVAAKKK) the composition is skewed to basic residues. Lysine 186 is modified (N6-methyllysine; by EHMT1 and EHMT2). Serine 187 is subject to ADP-ribosylserine. Residue lysine 212 is modified to N6-(2-hydroxyisobutyryl)lysine.

Belongs to the histone H1/H5 family. In terms of assembly, interacts with TSC22D1 isoform 2. In terms of processing, H1 histones are progressively phosphorylated during the cell cycle, becoming maximally phosphorylated during late G2 phase and M phase, and being dephosphorylated sharply thereafter. Post-translationally, crotonylation (Kcr) is specifically present in male germ cells and marks testis-specific genes in post-meiotic cells, including X-linked genes that escape sex chromosome inactivation in haploid cells. Crotonylation marks active promoters and enhancers and confers resistance to transcriptional repressors. It is also associated with post-meiotically activated genes on autosomes. ADP-ribosylated on Ser-187 in response to DNA damage. In terms of processing, citrullination at Arg-54 (H1R54ci) by PADI4 takes place within the DNA-binding site of H1 and results in its displacement from chromatin and global chromatin decondensation, thereby promoting pluripotency and stem cell maintenance. Post-translationally, hydroxybutyrylation of histones is induced by starvation.

The protein resides in the nucleus. It is found in the chromosome. Functionally, histone H1 protein binds to linker DNA between nucleosomes forming the macromolecular structure known as the chromatin fiber. Histones H1 are necessary for the condensation of nucleosome chains into higher-order structured fibers. Also acts as a regulator of individual gene transcription through chromatin remodeling, nucleosome spacing and DNA methylation. In Mus musculus (Mouse), this protein is Histone H1.2.